The primary structure comprises 558 residues: Membrane protein insertase YidC (558 aa).

Helical transmembrane passes span 3 to 23, 364 to 384, 438 to 458, 477 to 497, and 508 to 528; these read IKRTVLWVIFFMSAVMLFDNW, FVGNWGWAIVLLTLLIKAVFF, LPVVIQIPVFISLYWVLLASV, PYFILPVLMAVSMFVQTKLNP, and MMFMPIAFSVMFFFFPAGLVL.

This sequence belongs to the OXA1/ALB3/YidC family. Type 1 subfamily. In terms of assembly, interacts with the Sec translocase complex via SecD. Specifically interacts with transmembrane segments of nascent integral membrane proteins during membrane integration.

Its subcellular location is the cell inner membrane. Required for the insertion and/or proper folding and/or complex formation of integral membrane proteins into the membrane. Involved in integration of membrane proteins that insert both dependently and independently of the Sec translocase complex, as well as at least some lipoproteins. Aids folding of multispanning membrane proteins. This chain is Membrane protein insertase YidC, found in Burkholderia pseudomallei (strain K96243).